Consider the following 843-residue polypeptide: Protein P (843 aa).

The terminal protein domain (TP) stretch occupies residues 1 to 177; it reads MPLSYPHFRK…FCGSPYSWEQ (177 aa). The segment at 178 to 346 is spacer; sequence ELQHGSTSLN…YCLSHIINLL (169 aa). The tract at residues 284–308 is disordered; sequence EANPSLSTSKRHTSTGNAVELNPVP. A polymerase/reverse transcriptase domain (RT) region spans residues 347-690; it reads EDWGPCYEHG…YMNLYPVARQ (344 aa). Positions 357–600 constitute a Reverse transcriptase domain; sequence QHHIRTPRTP…YNLHFMGYVI (244 aa). Mg(2+)-binding residues include D429, D551, and D552.

Belongs to the hepadnaviridae P protein family.

The enzyme catalyses DNA(n) + a 2'-deoxyribonucleoside 5'-triphosphate = DNA(n+1) + diphosphate. It carries out the reaction Endonucleolytic cleavage to 5'-phosphomonoester.. Activated by host HSP70 and HSP40 in vitro to be able to bind the epsilon loop of the pgRNA. Because deletion of the RNase H region renders the protein partly chaperone-independent, the chaperones may be needed indirectly to relieve occlusion of the RNA-binding site by this domain. Inhibited by several reverse-transcriptase inhibitors: Lamivudine, Adefovir and Entecavir. Multifunctional enzyme that converts the viral RNA genome into dsDNA in viral cytoplasmic capsids. This enzyme displays a DNA polymerase activity that can copy either DNA or RNA templates, and a ribonuclease H (RNase H) activity that cleaves the RNA strand of RNA-DNA heteroduplexes in a partially processive 3'- to 5'-endonucleasic mode. Neo-synthesized pregenomic RNA (pgRNA) are encapsidated together with the P protein, and reverse-transcribed inside the nucleocapsid. Initiation of reverse-transcription occurs first by binding the epsilon loop on the pgRNA genome, and is initiated by protein priming, thereby the 5'-end of (-)DNA is covalently linked to P protein. Partial (+)DNA is synthesized from the (-)DNA template and generates the relaxed circular DNA (RC-DNA) genome. After budding and infection, the RC-DNA migrates in the nucleus, and is converted into a plasmid-like covalently closed circular DNA (cccDNA). The activity of P protein does not seem to be necessary for cccDNA generation, and is presumably released from (+)DNA by host nuclear DNA repair machinery. In Homo sapiens (Human), this protein is Protein P.